A 257-amino-acid chain; its full sequence is MPARCVAAHCGNTTKSGKSLFRFPKDRAVRLLWDRFVRGCRADWYGGNDRSVICSDHFAPACFDVSSVIQKNLRFSQRLRLVAGAVPTLHRVPAPAPKRGEEGDQAGRLDTRGELQAARHSEAAPGPVSCTRPRAGKQAAASQITCENELVQTQPHADNPSNTVTSVPTHCEEGPVHKSTQISLKRPRHRSVGIQAKVKAFGKRLCNATTQTEELWSRTSSLFDIYSSDSETDTDWDIKSEQSDLSYMAVQVKEETC.

A THAP-type zinc finger spans residues 1–90; it reads MPARCVAAHC…LVAGAVPTLH (90 aa). Over residues 154–168 the composition is skewed to polar residues; it reads QPHADNPSNTVTSVP. A disordered region spans residues 154–178; the sequence is QPHADNPSNTVTSVPTHCEEGPVHK.

The protein is THAP domain-containing protein 10 (THAP10) of Homo sapiens (Human).